The sequence spans 206 residues: Potassium-transporting ATPase KdpC subunit (206 aa).

Residues 14-34 (VLAVFTLFGLGLAYSLIATGI) traverse the membrane as a helical segment.

Belongs to the KdpC family. In terms of assembly, the system is composed of three essential subunits: KdpA, KdpB and KdpC.

The protein localises to the cell inner membrane. Its function is as follows. Part of the high-affinity ATP-driven potassium transport (or Kdp) system, which catalyzes the hydrolysis of ATP coupled with the electrogenic transport of potassium into the cytoplasm. This subunit acts as a catalytic chaperone that increases the ATP-binding affinity of the ATP-hydrolyzing subunit KdpB by the formation of a transient KdpB/KdpC/ATP ternary complex. In Xanthomonas axonopodis pv. citri (strain 306), this protein is Potassium-transporting ATPase KdpC subunit.